A 29-amino-acid polypeptide reads, in one-letter code: Galanin (29 aa).

A29 is subject to Alanine amide.

It belongs to the galanin family.

It localises to the secreted. Functionally, contracts smooth muscle of the gastrointestinal and genitourinary tract, regulates growth hormone release, modulates insulin release, and may be involved in the control of adrenal secretion. This Pelophylax ridibundus (Marsh frog) protein is Galanin (gal).